The primary structure comprises 557 residues: Glypican-4 (557 aa).

An N-terminal signal peptide occupies residues 1–18 (MARLGLLALLCTLAALSA). The residue at position 357 (serine 357) is a Phosphoserine. Serine 494, serine 498, and serine 500 each carry an O-linked (Xyl...) (glycosaminoglycan) serine glycan. A glycan (N-linked (GlcNAc...) asparagine) is linked at asparagine 514. Serine 529 is lipidated: GPI-anchor amidated serine. Residues 530–557 (AGGAHAEAKPYLLAALCILFLAVQGEWR) constitute a propeptide, removed in mature form.

It belongs to the glypican family. As to expression, highly expressed in developing brain and kidney.

The protein resides in the cell membrane. It localises to the secreted. The protein localises to the extracellular space. Functionally, cell surface proteoglycan that bears heparan sulfate. May be involved in the development of kidney tubules and of the central nervous system. In Mus musculus (Mouse), this protein is Glypican-4 (Gpc4).